A 376-amino-acid chain; its full sequence is MSQIFADRRAAVPARVISFCGAALAVWAGLAVQPAMAVDPPVDCGRALGLHFWSSASLISDQTPDGTLIGKPVVGRSLLSKSCKVPDDIKEDLSDNHDGEPVDIVLELGSNYKIRPQSYGHPGIVVDLPFGSTEETGIAIYIDFGSSPMQKVGERQWLYPQKGEVLFDVLTINGDNAEVRYQAIKVGPLKRPRKLVLSQFPNLFTYKWVFMRGTSQERVLAQGTIDTDVATSTIDLKTCRYTSQTVSLPIIQRSALTGVGTTLGMTDFQMPFWCYGWPKVSVYMSATKTQTGVDGVALPATGQAAGMASGVGVQLINGKTQQPVKLGLQGKIALPEAQQTESATFSLPMKAQYYQTSTSTSAGKLSVTYAVTLNYD.

An N-terminal signal peptide occupies residues 1–37; sequence MSQIFADRRAAVPARVISFCGAALAVWAGLAVQPAMA.

This is Protein FhaE (fhaE) from Bordetella pertussis (strain Tohama I / ATCC BAA-589 / NCTC 13251).